The following is a 180-amino-acid chain: Large ribosomal subunit protein uL5 (180 aa).

This sequence belongs to the universal ribosomal protein uL5 family. As to quaternary structure, part of the 50S ribosomal subunit; part of the 5S rRNA/L5/L18/L25 subcomplex. Contacts the 5S rRNA and the P site tRNA. Forms a bridge to the 30S subunit in the 70S ribosome.

This is one of the proteins that bind and probably mediate the attachment of the 5S RNA into the large ribosomal subunit, where it forms part of the central protuberance. In the 70S ribosome it contacts protein S13 of the 30S subunit (bridge B1b), connecting the 2 subunits; this bridge is implicated in subunit movement. Contacts the P site tRNA; the 5S rRNA and some of its associated proteins might help stabilize positioning of ribosome-bound tRNAs. This chain is Large ribosomal subunit protein uL5, found in Xanthomonas oryzae pv. oryzae (strain MAFF 311018).